The sequence spans 206 residues: Large ribosomal subunit protein uL4 (206 aa).

Residues 65-85 (KQKGSGGARHGDRKAPQFRGG) are disordered.

It belongs to the universal ribosomal protein uL4 family. As to quaternary structure, part of the 50S ribosomal subunit.

Its function is as follows. One of the primary rRNA binding proteins, this protein initially binds near the 5'-end of the 23S rRNA. It is important during the early stages of 50S assembly. It makes multiple contacts with different domains of the 23S rRNA in the assembled 50S subunit and ribosome. In terms of biological role, forms part of the polypeptide exit tunnel. The protein is Large ribosomal subunit protein uL4 of Parvibaculum lavamentivorans (strain DS-1 / DSM 13023 / NCIMB 13966).